The primary structure comprises 365 residues: Peptide chain release factor 2 (365 aa).

N5-methylglutamine is present on Gln-252.

Belongs to the prokaryotic/mitochondrial release factor family. Post-translationally, methylated by PrmC. Methylation increases the termination efficiency of RF2.

It is found in the cytoplasm. Functionally, peptide chain release factor 2 directs the termination of translation in response to the peptide chain termination codons UGA and UAA. In Aeromonas hydrophila subsp. hydrophila (strain ATCC 7966 / DSM 30187 / BCRC 13018 / CCUG 14551 / JCM 1027 / KCTC 2358 / NCIMB 9240 / NCTC 8049), this protein is Peptide chain release factor 2.